The following is a 421-amino-acid chain: Probable sugar-binding periplasmic protein (421 aa).

An N-terminal signal peptide occupies residues 1-27 (MHKLLKLAAMGTAACALLAGMAPVANA).

Belongs to the bacterial solute-binding protein 1 family.

It localises to the periplasm. Its function is as follows. Part of a binding-protein-dependent transport system for a sugar. The protein is Probable sugar-binding periplasmic protein of Brucella melitensis biotype 1 (strain ATCC 23456 / CCUG 17765 / NCTC 10094 / 16M).